Consider the following 342-residue polypeptide: Cytochrome c oxidase subunit 2 (342 aa).

Positions 1–22 (MKLWKTASRFLPLSFLTLFLTG) are cleaved as a signal peptide. A lipid anchor (N-palmitoyl cysteine) is attached at C23. C23 is lipidated: S-diacylglycerol cysteine. The Extracellular portion of the chain corresponds to 23–50 (CLGEENLTALDPKGPQAQWIYDNMILSI). The interval 23–249 (CLGEENLTAL…MSAEVEEPTE (227 aa)) is cytochrome c oxidase subunit II. A helical transmembrane segment spans residues 51-69 (IVMALVSIVVFAIFFIILA). Residues 70–89 (KYRRKPGDDEIPKQVHGNTA) are Cytoplasmic-facing. Residues 90–108 (LEITWTVIPIILLVILAVP) traverse the membrane as a helical segment. At 109–342 (TITGTFMFAD…AYLRSLKVME (234 aa)) the chain is on the extracellular side. H175, C210, C214, and H218 together coordinate Cu cation. Residues 250 to 342 (TLANQGRQVF…AYLRSLKVME (93 aa)) form the Cytochrome c domain. Heme c is bound by residues C264, C267, H268, and M317.

The protein belongs to the cytochrome c oxidase subunit 2 family. The cofactor is Cu cation. Heme c is required as a cofactor.

Its subcellular location is the cell membrane. The enzyme catalyses 4 Fe(II)-[cytochrome c] + O2 + 8 H(+)(in) = 4 Fe(III)-[cytochrome c] + 2 H2O + 4 H(+)(out). In terms of biological role, subunits I and II form the functional core of the enzyme complex. Electrons originating in cytochrome c are transferred via heme a and Cu(A) to the binuclear center formed by heme a3 and Cu(B). This is Cytochrome c oxidase subunit 2 (ctaC) from Alkalihalophilus pseudofirmus (strain ATCC BAA-2126 / JCM 17055 / OF4) (Bacillus pseudofirmus).